We begin with the raw amino-acid sequence, 378 residues long: Glutamate 5-kinase 1 (378 aa).

Lysine 13 contacts ATP. Substrate-binding residues include serine 53, aspartate 140, and asparagine 152. 172–173 (SD) contributes to the ATP binding site. The 78-residue stretch at 278–355 (AGRLTVDAGA…AEIETVLGYE (78 aa)) folds into the PUA domain.

This sequence belongs to the glutamate 5-kinase family.

Its subcellular location is the cytoplasm. It carries out the reaction L-glutamate + ATP = L-glutamyl 5-phosphate + ADP. The protein operates within amino-acid biosynthesis; L-proline biosynthesis; L-glutamate 5-semialdehyde from L-glutamate: step 1/2. Its function is as follows. Catalyzes the transfer of a phosphate group to glutamate to form L-glutamate 5-phosphate. The chain is Glutamate 5-kinase 1 from Mesorhizobium japonicum (strain LMG 29417 / CECT 9101 / MAFF 303099) (Mesorhizobium loti (strain MAFF 303099)).